The chain runs to 351 residues: uncharacterized protein (351 aa).

Positions 1 to 61 (MNDKRKPSFQ…RDKQEVKETR (61 aa)) are disordered. 2 stretches are compositionally biased toward basic and acidic residues: residues 16–38 (FQER…HFND) and 44–61 (RNEK…KETR).

It belongs to the class IV-like SAM-binding methyltransferase superfamily. RNA methyltransferase TrmH family.

This is an uncharacterized protein from Haemophilus influenzae (strain ATCC 51907 / DSM 11121 / KW20 / Rd).